The primary structure comprises 1066 residues: Exportin-T (1066 aa).

It belongs to the exportin family.

It is found in the nucleus. The protein localises to the cytoplasm. Functionally, tRNA nucleus export receptor which facilitates tRNA translocation across the nuclear pore complex. Involved in pre-tRNA splicing, probably by affecting the interaction of pre-tRNA with splicing endonuclease. The polypeptide is Exportin-T (LOS1) (Laccaria bicolor (strain S238N-H82 / ATCC MYA-4686) (Bicoloured deceiver)).